The following is a 285-amino-acid chain: Iron uptake system component EfeM (285 aa).

An N-terminal signal peptide occupies residues 1–34 (MTYPLLTRKTLMKKTPLALLLTLGLLQTPLAAFA).

Belongs to the EfeM/EfeO family. Component of the iron transporter efeUOB/M complex composed of EfeU, EfeM and EfeB.

Its subcellular location is the periplasm. Part of the iron transporter system efeUOB/M involved in iron import. Specifically binds Fe(3+), which is produced by EfeB-mediated oxidation of Fe(2+), and delivers it to the cell inner membrane permease EfeU. Also binds Zn(2+) and Cu(2+) in vitro. The sequence is that of Iron uptake system component EfeM from Pseudomonas syringae pv. syringae (strain B728a).